We begin with the raw amino-acid sequence, 362 residues long: N5-carboxyaminoimidazole ribonucleotide synthase (362 aa).

Residues R108, K148, 153–159 (GYDGKGQ), 185–188 (EGFV), E193, H216, and 270–271 (NE) contribute to the ATP site. The 189-residue stretch at 112-300 (KQFLNESGIE…QFEQHIRAVA (189 aa)) folds into the ATP-grasp domain.

The protein belongs to the PurK/PurT family. In terms of assembly, homodimer.

It carries out the reaction 5-amino-1-(5-phospho-beta-D-ribosyl)imidazole + hydrogencarbonate + ATP = 5-carboxyamino-1-(5-phospho-D-ribosyl)imidazole + ADP + phosphate + 2 H(+). It participates in purine metabolism; IMP biosynthesis via de novo pathway; 5-amino-1-(5-phospho-D-ribosyl)imidazole-4-carboxylate from 5-amino-1-(5-phospho-D-ribosyl)imidazole (N5-CAIR route): step 1/2. In terms of biological role, catalyzes the ATP-dependent conversion of 5-aminoimidazole ribonucleotide (AIR) and HCO(3)(-) to N5-carboxyaminoimidazole ribonucleotide (N5-CAIR). The polypeptide is N5-carboxyaminoimidazole ribonucleotide synthase (Brucella melitensis biotype 1 (strain ATCC 23456 / CCUG 17765 / NCTC 10094 / 16M)).